The sequence spans 281 residues: UPF0046 protein C25E10.12 (281 aa).

It belongs to the UPF0046 family.

The protein is UPF0046 protein C25E10.12 of Caenorhabditis elegans.